A 149-amino-acid chain; its full sequence is D-aminoacyl-tRNA deacylase (149 aa).

The Gly-cisPro motif, important for rejection of L-amino acids signature appears at 137-138; sequence GP.

Belongs to the DTD family. Homodimer.

It is found in the cytoplasm. It carries out the reaction glycyl-tRNA(Ala) + H2O = tRNA(Ala) + glycine + H(+). It catalyses the reaction a D-aminoacyl-tRNA + H2O = a tRNA + a D-alpha-amino acid + H(+). Its function is as follows. An aminoacyl-tRNA editing enzyme that deacylates mischarged D-aminoacyl-tRNAs. Also deacylates mischarged glycyl-tRNA(Ala), protecting cells against glycine mischarging by AlaRS. Acts via tRNA-based rather than protein-based catalysis; rejects L-amino acids rather than detecting D-amino acids in the active site. By recycling D-aminoacyl-tRNA to D-amino acids and free tRNA molecules, this enzyme counteracts the toxicity associated with the formation of D-aminoacyl-tRNA entities in vivo and helps enforce protein L-homochirality. This chain is D-aminoacyl-tRNA deacylase, found in Fervidobacterium nodosum (strain ATCC 35602 / DSM 5306 / Rt17-B1).